The sequence spans 548 residues: Membrane protein insertase YidC (548 aa).

The helical transmembrane segment at 6–26 (NLLIIALLFVSFMIWQAWEQD) threads the bilayer. Positions 28–52 (NPQPQQQTTQTTTTAAGSAADQGVP) are disordered. Residues 29 to 41 (PQPQQQTTQTTTT) are compositionally biased toward low complexity. Transmembrane regions (helical) follow at residues 345–365 (KFIH…TFIV), 420–440 (LGGC…YYML), 458–478 (LSAQ…MFFI), and 499–519 (PVIF…YYIV).

The protein belongs to the OXA1/ALB3/YidC family. Type 1 subfamily. In terms of assembly, interacts with the Sec translocase complex via SecD. Specifically interacts with transmembrane segments of nascent integral membrane proteins during membrane integration.

The protein localises to the cell inner membrane. Its function is as follows. Required for the insertion and/or proper folding and/or complex formation of integral membrane proteins into the membrane. Involved in integration of membrane proteins that insert both dependently and independently of the Sec translocase complex, as well as at least some lipoproteins. Aids folding of multispanning membrane proteins. The protein is Membrane protein insertase YidC of Klebsiella pneumoniae (strain 342).